The following is a 122-amino-acid chain: Large ribosomal subunit protein uL14 (122 aa).

It belongs to the universal ribosomal protein uL14 family. As to quaternary structure, part of the 50S ribosomal subunit. Forms a cluster with proteins L3 and L19. In the 70S ribosome, L14 and L19 interact and together make contacts with the 16S rRNA in bridges B5 and B8.

Its function is as follows. Binds to 23S rRNA. Forms part of two intersubunit bridges in the 70S ribosome. The sequence is that of Large ribosomal subunit protein uL14 from Cellvibrio japonicus (strain Ueda107) (Pseudomonas fluorescens subsp. cellulosa).